Consider the following 227-residue polypeptide: Cytochrome c oxidase subunit 2 (227 aa).

The Mitochondrial intermembrane segment spans residues 1–14; that stretch reads MAHPVQLGLQDATS. Residues 15 to 45 traverse the membrane as a helical segment; the sequence is PVMEELVTFHDHALMAMFLISFLILYALSAT. The Mitochondrial matrix segment spans residues 46–59; it reads LTTKLTNTNITDAQ. The chain crosses the membrane as a helical span at residues 60–87; sequence EMETIWTILPAVILVLIALPSLRILYMT. The Mitochondrial intermembrane portion of the chain corresponds to 88 to 227; that stretch reads DEINNPSFTI…IFEMGPVFTL (140 aa). Cu cation contacts are provided by histidine 161, cysteine 196, glutamate 198, cysteine 200, histidine 204, and methionine 207. Glutamate 198 lines the Mg(2+) pocket.

The protein belongs to the cytochrome c oxidase subunit 2 family. As to quaternary structure, component of the cytochrome c oxidase (complex IV, CIV), a multisubunit enzyme composed of 14 subunits. The complex is composed of a catalytic core of 3 subunits MT-CO1, MT-CO2 and MT-CO3, encoded in the mitochondrial DNA, and 11 supernumerary subunits COX4I, COX5A, COX5B, COX6A, COX6B, COX6C, COX7A, COX7B, COX7C, COX8 and NDUFA4, which are encoded in the nuclear genome. The complex exists as a monomer or a dimer and forms supercomplexes (SCs) in the inner mitochondrial membrane with NADH-ubiquinone oxidoreductase (complex I, CI) and ubiquinol-cytochrome c oxidoreductase (cytochrome b-c1 complex, complex III, CIII), resulting in different assemblies (supercomplex SCI(1)III(2)IV(1) and megacomplex MCI(2)III(2)IV(2)). Found in a complex with TMEM177, COA6, COX18, COX20, SCO1 and SCO2. Interacts with TMEM177 in a COX20-dependent manner. Interacts with COX20. Interacts with COX16. Requires Cu cation as cofactor.

The protein resides in the mitochondrion inner membrane. The catalysed reaction is 4 Fe(II)-[cytochrome c] + O2 + 8 H(+)(in) = 4 Fe(III)-[cytochrome c] + 2 H2O + 4 H(+)(out). In terms of biological role, component of the cytochrome c oxidase, the last enzyme in the mitochondrial electron transport chain which drives oxidative phosphorylation. The respiratory chain contains 3 multisubunit complexes succinate dehydrogenase (complex II, CII), ubiquinol-cytochrome c oxidoreductase (cytochrome b-c1 complex, complex III, CIII) and cytochrome c oxidase (complex IV, CIV), that cooperate to transfer electrons derived from NADH and succinate to molecular oxygen, creating an electrochemical gradient over the inner membrane that drives transmembrane transport and the ATP synthase. Cytochrome c oxidase is the component of the respiratory chain that catalyzes the reduction of oxygen to water. Electrons originating from reduced cytochrome c in the intermembrane space (IMS) are transferred via the dinuclear copper A center (CU(A)) of subunit 2 and heme A of subunit 1 to the active site in subunit 1, a binuclear center (BNC) formed by heme A3 and copper B (CU(B)). The BNC reduces molecular oxygen to 2 water molecules using 4 electrons from cytochrome c in the IMS and 4 protons from the mitochondrial matrix. The chain is Cytochrome c oxidase subunit 2 (MT-CO2) from Theropithecus gelada (Gelada baboon).